Here is a 149-residue protein sequence, read N- to C-terminus: Protein AE7-like 2 (149 aa).

This sequence belongs to the MIP18 family.

In terms of biological role, may play a role in chromosome segregation through establishment of sister chromatid cohesion. Unable to complement ae7 mutants, and thus probably not involved in the cytosolic iron-sulfur assembly (CIA) pathway. This Arabidopsis thaliana (Mouse-ear cress) protein is Protein AE7-like 2.